Consider the following 944-residue polypeptide: DNA ligase 4 (944 aa).

9 residues coordinate ATP: Glu280, Lys282, Arg287, Glu340, Phe382, Glu442, Lys447, Lys464, and Lys466. Lys282 (N6-AMP-lysine intermediate) is an active-site residue. Position 340 (Glu340) interacts with Mg(2+). A Mg(2+)-binding site is contributed by Glu442. BRCT domains lie at 681–780 (PISN…PNYC) and 836–941 (FPLF…DFPV).

Belongs to the ATP-dependent DNA ligase family. In terms of assembly, component of the DNA ligase IV complex, composed of DNL4, LIF1 and NEJ1. Interacts (via BRCT domain) with LIF1. Interacts with NEJ1. Interacts with POL4 in the DNL4-LIF1 complex. It depends on Mg(2+) as a cofactor.

Its subcellular location is the nucleus. It catalyses the reaction ATP + (deoxyribonucleotide)n-3'-hydroxyl + 5'-phospho-(deoxyribonucleotide)m = (deoxyribonucleotide)n+m + AMP + diphosphate.. Its function is as follows. DNA ligase involved in DNA non-homologous end joining (NHEJ); required for double-strand break (DSB) repair. This chain is DNA ligase 4 (DNL4), found in Saccharomyces cerevisiae (strain ATCC 204508 / S288c) (Baker's yeast).